Here is a 475-residue protein sequence, read N- to C-terminus: Tetratricopeptide repeat protein 29 (475 aa).

TPR repeat units lie at residues 92–131 (DALREAARVRSLFWLQKPLEEQPDKLDYFYHYLTRAEDAE), 136–173 (FEDVYNNLYALACYFNNPEDKWVRNHFYERCFKIAQLI), 182–215 (AEAHMHMGLLYEEDGQLLEAAEHYEAFHQLTQGR), 234–267 (LRTYRLLSDKMLQNKEYKQAIKILIKASEIAKEG), 274–307 (GEASYYLGLAHLAAEEYETALTVLDTYCKISTEL), 314–347 (GRAYEAIAKVLQSQGNTTEAIKYLKKFVKIARNN), and 354–387 (VRASTMLGDIYNEKGHYNKASQRFQQAFDTTVEL). Positions 436–475 (DIEPDPVTEEFRGSTVETVSQNSEHLEELSRFPGDQKNET) are disordered. Residues 459–475 (EHLEELSRFPGDQKNET) show a composition bias toward basic and acidic residues.

Its subcellular location is the cytoplasm. It is found in the cytoskeleton. The protein localises to the flagellum axoneme. Functionally, axonemal protein which is implicated in axonemal and/or peri-axonemal structure assembly and regulates flagellum assembly and beating and therefore sperm motility. The sequence is that of Tetratricopeptide repeat protein 29 (TTC29) from Macaca fascicularis (Crab-eating macaque).